The chain runs to 227 residues: MSHTEVKLKIPFGNKLLDAVCLVPNKSLTYGIILTHGASGDMNLPHLMSLASHLASHGFFCLRFTCKGLNIVHRIKAYKSVLNYLKTSGEYKLAGVFLGGRSMGSRAAASVMCHIEPDDGDDFVRGLICISYPLHHPKQQHKLRDEDLFRLKEPVLFVSGSADEMCEKNLLEKVAQKMQAPHKIHWIEKANHSMAVKGRSTNDVFKEINTQILFWIQEITEMDKKCH.

This Homo sapiens (Human) protein is Testis-expressed protein 30 (TEX30).